Reading from the N-terminus, the 115-residue chain is Large ribosomal subunit protein uL24 (115 aa).

It belongs to the universal ribosomal protein uL24 family. In terms of assembly, part of the 50S ribosomal subunit.

Its function is as follows. One of two assembly initiator proteins, it binds directly to the 5'-end of the 23S rRNA, where it nucleates assembly of the 50S subunit. Functionally, one of the proteins that surrounds the polypeptide exit tunnel on the outside of the subunit. The protein is Large ribosomal subunit protein uL24 of Deinococcus geothermalis (strain DSM 11300 / CIP 105573 / AG-3a).